A 267-amino-acid polypeptide reads, in one-letter code: Phosphate import ATP-binding protein PstB (267 aa).

The ABC transporter domain maps to Val-21–Ile-262. Gly-53–Ser-60 is a binding site for ATP.

It belongs to the ABC transporter superfamily. Phosphate importer (TC 3.A.1.7) family. In terms of assembly, the complex is composed of two ATP-binding proteins (PstB), two transmembrane proteins (PstC and PstA) and a solute-binding protein (PstS).

The protein resides in the cell inner membrane. It carries out the reaction phosphate(out) + ATP + H2O = ADP + 2 phosphate(in) + H(+). Functionally, part of the ABC transporter complex PstSACB involved in phosphate import. Responsible for energy coupling to the transport system. The sequence is that of Phosphate import ATP-binding protein PstB from Xanthomonas euvesicatoria pv. vesicatoria (strain 85-10) (Xanthomonas campestris pv. vesicatoria).